A 505-amino-acid chain; its full sequence is Lysine--tRNA ligase (505 aa).

The Mg(2+) site is built by E415 and E422.

Belongs to the class-II aminoacyl-tRNA synthetase family. As to quaternary structure, homodimer. Mg(2+) is required as a cofactor.

It is found in the cytoplasm. The enzyme catalyses tRNA(Lys) + L-lysine + ATP = L-lysyl-tRNA(Lys) + AMP + diphosphate. The sequence is that of Lysine--tRNA ligase from Enterobacter sp. (strain 638).